The chain runs to 211 residues: Small ribosomal subunit protein uS3 (211 aa).

Positions 38–106 constitute a KH type-2 domain; it reads LRSFVKKTFH…EVELHIVEVK (69 aa).

The protein belongs to the universal ribosomal protein uS3 family. Part of the 30S ribosomal subunit. Forms a tight complex with proteins S10 and S14.

Binds the lower part of the 30S subunit head. Binds mRNA in the 70S ribosome, positioning it for translation. The chain is Small ribosomal subunit protein uS3 from Anaplasma phagocytophilum (strain HZ).